The chain runs to 137 residues: Nucleoside diphosphate kinase (137 aa).

Residues K10, F58, R86, T92, R103, and N113 each contribute to the ATP site. The active-site Pros-phosphohistidine intermediate is H116.

Belongs to the NDK family. As to quaternary structure, homotetramer. The cofactor is Mg(2+).

The protein resides in the cytoplasm. The catalysed reaction is a 2'-deoxyribonucleoside 5'-diphosphate + ATP = a 2'-deoxyribonucleoside 5'-triphosphate + ADP. It catalyses the reaction a ribonucleoside 5'-diphosphate + ATP = a ribonucleoside 5'-triphosphate + ADP. Functionally, major role in the synthesis of nucleoside triphosphates other than ATP. The ATP gamma phosphate is transferred to the NDP beta phosphate via a ping-pong mechanism, using a phosphorylated active-site intermediate. This chain is Nucleoside diphosphate kinase, found in Helicobacter pylori (strain P12).